The sequence spans 417 residues: uncharacterized protein (417 aa).

The protein to M.tuberculosis Rv2067c.

This is an uncharacterized protein from Synechococcus sp. (strain ATCC 27144 / PCC 6301 / SAUG 1402/1) (Anacystis nidulans).